A 607-amino-acid chain; its full sequence is Proteasome-associated ATPase (607 aa).

Over residues 1–17 the composition is skewed to basic and acidic residues; the sequence is MTESDRHDTPKGDRRIS. The tract at residues 1–65 is disordered; the sequence is MTESDRHDTP…GRPAADNKEL (65 aa). Positions 59-102 form a coiled coil; the sequence is AADNKELQERVDNLTARNAKLLDTLKDARQQLVALREEVDRLGQ. 294–299 serves as a coordination point for ATP; sequence GCGKTL. The interval 606 to 607 is docks into pockets in the proteasome alpha-ring; that stretch reads YL.

Belongs to the AAA ATPase family. As to quaternary structure, homohexamer. Assembles into a hexameric ring structure that caps the 20S proteasome core. Strongly interacts with the prokaryotic ubiquitin-like protein Pup through a hydrophobic interface; the interacting region of ARC lies in its N-terminal coiled-coil domain. There is one Pup binding site per ARC hexamer ring. Upon ATP-binding, the C-terminus of ARC interacts with the alpha-rings of the proteasome core, possibly by binding to the intersubunit pockets.

Its pathway is protein degradation; proteasomal Pup-dependent pathway. Its function is as follows. ATPase which is responsible for recognizing, binding, unfolding and translocation of pupylated proteins into the bacterial 20S proteasome core particle. May be essential for opening the gate of the 20S proteasome via an interaction with its C-terminus, thereby allowing substrate entry and access to the site of proteolysis. Thus, the C-termini of the proteasomal ATPase may function like a 'key in a lock' to induce gate opening and therefore regulate proteolysis. The sequence is that of Proteasome-associated ATPase from Gordonia bronchialis (strain ATCC 25592 / DSM 43247 / BCRC 13721 / JCM 3198 / KCTC 3076 / NBRC 16047 / NCTC 10667) (Rhodococcus bronchialis).